Here is a 95-residue protein sequence, read N- to C-terminus: Small ribosomal subunit protein uS19 (95 aa).

Positions 76–95 are disordered; the sequence is PTRTFRGHGGKKADKRGKLK. Basic residues predominate over residues 80 to 95; that stretch reads FRGHGGKKADKRGKLK.

Belongs to the universal ribosomal protein uS19 family.

In terms of biological role, protein S19 forms a complex with S13 that binds strongly to the 16S ribosomal RNA. The polypeptide is Small ribosomal subunit protein uS19 (Herpetosiphon aurantiacus (strain ATCC 23779 / DSM 785 / 114-95)).